A 251-amino-acid polypeptide reads, in one-letter code: Pyridoxine 5'-phosphate synthase (251 aa).

N7 provides a ligand contact to 3-amino-2-oxopropyl phosphate. 1-deoxy-D-xylulose 5-phosphate is bound at residue D9–H10. R18 lines the 3-amino-2-oxopropyl phosphate pocket. H43 serves as the catalytic Proton acceptor. 1-deoxy-D-xylulose 5-phosphate contacts are provided by R45 and H50. Residue E73 is the Proton acceptor of the active site. Residue T103 coordinates 1-deoxy-D-xylulose 5-phosphate. H197 functions as the Proton donor in the catalytic mechanism. 3-amino-2-oxopropyl phosphate contacts are provided by residues G198 and G219–H220.

Belongs to the PNP synthase family. In terms of assembly, homooctamer; tetramer of dimers.

It localises to the cytoplasm. The catalysed reaction is 3-amino-2-oxopropyl phosphate + 1-deoxy-D-xylulose 5-phosphate = pyridoxine 5'-phosphate + phosphate + 2 H2O + H(+). It participates in cofactor biosynthesis; pyridoxine 5'-phosphate biosynthesis; pyridoxine 5'-phosphate from D-erythrose 4-phosphate: step 5/5. Its function is as follows. Catalyzes the complicated ring closure reaction between the two acyclic compounds 1-deoxy-D-xylulose-5-phosphate (DXP) and 3-amino-2-oxopropyl phosphate (1-amino-acetone-3-phosphate or AAP) to form pyridoxine 5'-phosphate (PNP) and inorganic phosphate. This Caulobacter sp. (strain K31) protein is Pyridoxine 5'-phosphate synthase.